The sequence spans 606 residues: 4-hydroxy-3-methylbut-2-en-1-yl diphosphate synthase (flavodoxin) (606 aa).

Residues Cys513, Cys516, Cys547, and Glu554 each coordinate [4Fe-4S] cluster.

The protein belongs to the IspG family. The cofactor is [4Fe-4S] cluster.

It catalyses the reaction (2E)-4-hydroxy-3-methylbut-2-enyl diphosphate + oxidized [flavodoxin] + H2O + 2 H(+) = 2-C-methyl-D-erythritol 2,4-cyclic diphosphate + reduced [flavodoxin]. The protein operates within isoprenoid biosynthesis; isopentenyl diphosphate biosynthesis via DXP pathway; isopentenyl diphosphate from 1-deoxy-D-xylulose 5-phosphate: step 5/6. In terms of biological role, converts 2C-methyl-D-erythritol 2,4-cyclodiphosphate (ME-2,4cPP) into 1-hydroxy-2-methyl-2-(E)-butenyl 4-diphosphate. The protein is 4-hydroxy-3-methylbut-2-en-1-yl diphosphate synthase (flavodoxin) of Chlamydia caviae (strain ATCC VR-813 / DSM 19441 / 03DC25 / GPIC) (Chlamydophila caviae).